Reading from the N-terminus, the 208-residue chain is Ribosome maturation factor RimP (208 aa).

The protein belongs to the RimP family.

The protein localises to the cytoplasm. Its function is as follows. Required for maturation of 30S ribosomal subunits. The polypeptide is Ribosome maturation factor RimP (Bartonella tribocorum (strain CIP 105476 / IBS 506)).